Reading from the N-terminus, the 163-residue chain is Large ribosomal subunit protein uL10 (163 aa).

The protein belongs to the universal ribosomal protein uL10 family. As to quaternary structure, part of the ribosomal stalk of the 50S ribosomal subunit. The N-terminus interacts with L11 and the large rRNA to form the base of the stalk. The C-terminus forms an elongated spine to which L12 dimers bind in a sequential fashion forming a multimeric L10(L12)X complex.

Its function is as follows. Forms part of the ribosomal stalk, playing a central role in the interaction of the ribosome with GTP-bound translation factors. This Blochmanniella pennsylvanica (strain BPEN) protein is Large ribosomal subunit protein uL10.